The primary structure comprises 224 residues: UPF0173 metal-dependent hydrolase Memar_1421 (224 aa).

This sequence belongs to the UPF0173 family.

This chain is UPF0173 metal-dependent hydrolase Memar_1421, found in Methanoculleus marisnigri (strain ATCC 35101 / DSM 1498 / JR1).